A 513-amino-acid polypeptide reads, in one-letter code: Bifunctional purine biosynthesis protein PurH (513 aa).

The region spanning 1–144 is the MGS-like domain; the sequence is MSKRALISVS…KNHERVGIVV (144 aa).

Belongs to the PurH family.

It catalyses the reaction (6R)-10-formyltetrahydrofolate + 5-amino-1-(5-phospho-beta-D-ribosyl)imidazole-4-carboxamide = 5-formamido-1-(5-phospho-D-ribosyl)imidazole-4-carboxamide + (6S)-5,6,7,8-tetrahydrofolate. The catalysed reaction is IMP + H2O = 5-formamido-1-(5-phospho-D-ribosyl)imidazole-4-carboxamide. It participates in purine metabolism; IMP biosynthesis via de novo pathway; 5-formamido-1-(5-phospho-D-ribosyl)imidazole-4-carboxamide from 5-amino-1-(5-phospho-D-ribosyl)imidazole-4-carboxamide (10-formyl THF route): step 1/1. The protein operates within purine metabolism; IMP biosynthesis via de novo pathway; IMP from 5-formamido-1-(5-phospho-D-ribosyl)imidazole-4-carboxamide: step 1/1. The polypeptide is Bifunctional purine biosynthesis protein PurH (Moorella thermoacetica (strain ATCC 39073 / JCM 9320)).